A 336-amino-acid polypeptide reads, in one-letter code: Holliday junction branch migration complex subunit RuvB (336 aa).

A large ATPase domain (RuvB-L) region spans residues 4–184 (ADRLISAGAT…FGIVQRLEFY (181 aa)). ATP is bound by residues Ile-23, Arg-24, Gly-65, Lys-68, Thr-69, Thr-70, 131-133 (EDY), Arg-174, Tyr-184, and Arg-221. Thr-69 is a Mg(2+) binding site. A small ATPAse domain (RuvB-S) region spans residues 185–255 (QVPDLQHIVG…IAAQALDMLN (71 aa)). Residues 258–336 (AEGFDYMDRK…HFGITPPEMP (79 aa)) form a head domain (RuvB-H) region. DNA-binding residues include Arg-294, Arg-313, and Arg-318.

Belongs to the RuvB family. As to quaternary structure, homohexamer. Forms an RuvA(8)-RuvB(12)-Holliday junction (HJ) complex. HJ DNA is sandwiched between 2 RuvA tetramers; dsDNA enters through RuvA and exits via RuvB. An RuvB hexamer assembles on each DNA strand where it exits the tetramer. Each RuvB hexamer is contacted by two RuvA subunits (via domain III) on 2 adjacent RuvB subunits; this complex drives branch migration. In the full resolvosome a probable DNA-RuvA(4)-RuvB(12)-RuvC(2) complex forms which resolves the HJ.

It is found in the cytoplasm. It carries out the reaction ATP + H2O = ADP + phosphate + H(+). Functionally, the RuvA-RuvB-RuvC complex processes Holliday junction (HJ) DNA during genetic recombination and DNA repair, while the RuvA-RuvB complex plays an important role in the rescue of blocked DNA replication forks via replication fork reversal (RFR). RuvA specifically binds to HJ cruciform DNA, conferring on it an open structure. The RuvB hexamer acts as an ATP-dependent pump, pulling dsDNA into and through the RuvAB complex. RuvB forms 2 homohexamers on either side of HJ DNA bound by 1 or 2 RuvA tetramers; 4 subunits per hexamer contact DNA at a time. Coordinated motions by a converter formed by DNA-disengaged RuvB subunits stimulates ATP hydrolysis and nucleotide exchange. Immobilization of the converter enables RuvB to convert the ATP-contained energy into a lever motion, pulling 2 nucleotides of DNA out of the RuvA tetramer per ATP hydrolyzed, thus driving DNA branch migration. The RuvB motors rotate together with the DNA substrate, which together with the progressing nucleotide cycle form the mechanistic basis for DNA recombination by continuous HJ branch migration. Branch migration allows RuvC to scan DNA until it finds its consensus sequence, where it cleaves and resolves cruciform DNA. The protein is Holliday junction branch migration complex subunit RuvB of Salmonella agona (strain SL483).